Reading from the N-terminus, the 343-residue chain is Ferrochelatase (343 aa).

Residues histidine 191 and glutamate 270 each contribute to the Fe cation site.

It belongs to the ferrochelatase family.

It localises to the cytoplasm. The catalysed reaction is heme b + 2 H(+) = protoporphyrin IX + Fe(2+). The protein operates within porphyrin-containing compound metabolism; protoheme biosynthesis; protoheme from protoporphyrin-IX: step 1/1. In terms of biological role, catalyzes the ferrous insertion into protoporphyrin IX. This chain is Ferrochelatase, found in Phenylobacterium zucineum (strain HLK1).